We begin with the raw amino-acid sequence, 105 residues long: uncharacterized protein (105 aa).

3 consecutive transmembrane segments (helical) span residues I14–W34, E41–L61, and V80–I100.

Its subcellular location is the cell membrane. This is an uncharacterized protein from Treponema pallidum (strain Nichols).